We begin with the raw amino-acid sequence, 757 residues long: RNA-directed RNA polymerase catalytic subunit (757 aa).

The segment at 50–82 is disordered; the sequence is SEKGKWTTNTETGAPQLNPIDGPLPEDNEPSGY. Polar residues predominate over residues 55–64; it reads WTTNTETGAP. 2 consecutive short sequence motifs (nuclear localization signal) follow at residues 187–195 and 203–216; these read RKRRVRDNM and RTIG…NKRI. The tract at residues 249-256 is promoter-binding site; sequence RGFVYFVE. The RdRp catalytic domain occupies 286 to 483; it reads VRKMMTNSQD…GINMSKKKSY (198 aa).

Belongs to the influenza viruses polymerase PB1 family. In terms of assembly, influenza RNA polymerase is composed of three subunits: PB1, PB2 and PA. Interacts (via N-terminus) with PA (via C-terminus). Interacts (via C-terminus) with PB2 (via N-terminus); this interaction is essential for transcription initiation. Phosphorylated by host PRKCA.

It is found in the host nucleus. The protein localises to the host cytoplasm. The enzyme catalyses RNA(n) + a ribonucleoside 5'-triphosphate = RNA(n+1) + diphosphate. Its function is as follows. RNA-dependent RNA polymerase which is responsible for replication and transcription of virus RNA segments. The transcription of viral mRNAs occurs by a unique mechanism called cap-snatching. 5' methylated caps of cellular mRNAs are cleaved after 10-13 nucleotides by PA. In turn, these short capped RNAs are used as primers by PB1 for transcription of viral mRNAs. During virus replication, PB1 initiates RNA synthesis and copy vRNA into complementary RNA (cRNA) which in turn serves as a template for the production of more vRNAs. The chain is RNA-directed RNA polymerase catalytic subunit from Influenza A virus (strain A/Leningrad/134/47/1957 H2N2).